Consider the following 255-residue polypeptide: Ribosome maturation factor RimP (255 aa).

Positions 177-255 (LRRGSAPPQD…ARLKNRDTLH (79 aa)) are disordered. Acidic residues predominate over residues 186–202 (DGEDVDEEAGEAPEDEV). Positions 216–230 (PKMDKKSDKKSDKPV) are enriched in basic and acidic residues.

This sequence belongs to the RimP family.

Its subcellular location is the cytoplasm. In terms of biological role, required for maturation of 30S ribosomal subunits. This chain is Ribosome maturation factor RimP, found in Methylorubrum populi (strain ATCC BAA-705 / NCIMB 13946 / BJ001) (Methylobacterium populi).